Here is a 175-residue protein sequence, read N- to C-terminus: Calcineurin subunit B (175 aa).

4 EF-hand domains span residues 21-56, 60-88, 90-125, and 131-166; these read DEIE…SANP, RIME…FSGR, SKDE…MVGS, and QLQQ…TEVA. Positions 34, 36, 38, 40, 45, 66, 68, 70, 72, 77, 103, 105, 107, 114, 144, 146, 148, 150, and 155 each coordinate Ca(2+).

Belongs to the calcineurin regulatory subunit family. In terms of assembly, composed of a catalytic subunit (A) and a regulatory subunit (B).

In terms of biological role, regulatory subunit of calcineurin, a calcium-dependent, calmodulin stimulated protein phosphatase. Confers calcium sensitivity. This chain is Calcineurin subunit B (CNB1), found in Candida glabrata (strain ATCC 2001 / BCRC 20586 / JCM 3761 / NBRC 0622 / NRRL Y-65 / CBS 138) (Yeast).